The sequence spans 153 residues: MRAVVQRVLEASVTVEGQRVSDIGPGLLVLLGVGKGDTEADVAWMVEKLATLRIFEDAAGKMNLSLEETSRQLIVVSQFTLYGDARKGRRPSFIDAMEPVSAKALYERTCELLRQRGLSVGTGIFAADMKVALVNDGPVTLLLESPGPAAPKG.

Residues 137-138 (GP) carry the Gly-cisPro motif, important for rejection of L-amino acids motif.

This sequence belongs to the DTD family. As to quaternary structure, homodimer.

Its subcellular location is the cytoplasm. The enzyme catalyses glycyl-tRNA(Ala) + H2O = tRNA(Ala) + glycine + H(+). It catalyses the reaction a D-aminoacyl-tRNA + H2O = a tRNA + a D-alpha-amino acid + H(+). Its function is as follows. An aminoacyl-tRNA editing enzyme that deacylates mischarged D-aminoacyl-tRNAs. Also deacylates mischarged glycyl-tRNA(Ala), protecting cells against glycine mischarging by AlaRS. Acts via tRNA-based rather than protein-based catalysis; rejects L-amino acids rather than detecting D-amino acids in the active site. By recycling D-aminoacyl-tRNA to D-amino acids and free tRNA molecules, this enzyme counteracts the toxicity associated with the formation of D-aminoacyl-tRNA entities in vivo and helps enforce protein L-homochirality. This Myxococcus xanthus (strain DK1622) protein is D-aminoacyl-tRNA deacylase.